Here is a 229-residue protein sequence, read N- to C-terminus: Lipoprotein-releasing system ATP-binding protein LolD (229 aa).

Residues histidine 9–valine 228 form the ABC transporter domain. Glycine 42–serine 49 is a binding site for ATP.

Belongs to the ABC transporter superfamily. Lipoprotein translocase (TC 3.A.1.125) family. In terms of assembly, the complex is composed of two ATP-binding proteins (LolD) and two transmembrane proteins (LolC and LolE).

The protein localises to the cell inner membrane. Part of the ABC transporter complex LolCDE involved in the translocation of mature outer membrane-directed lipoproteins, from the inner membrane to the periplasmic chaperone, LolA. Responsible for the formation of the LolA-lipoprotein complex in an ATP-dependent manner. This chain is Lipoprotein-releasing system ATP-binding protein LolD, found in Photobacterium profundum (strain SS9).